We begin with the raw amino-acid sequence, 528 residues long: DEAD-box ATP-dependent RNA helicase CshA (528 aa).

The Q motif motif lies at 2 to 30; the sequence is TTFRELGLSDSLLQSVESMGFEEATPIQA. Positions 33-203 constitute a Helicase ATP-binding domain; sequence IPHALQGKDI…ERFMTEPQHI (171 aa). 46–53 is an ATP binding site; that stretch reads AQTGTGKT. The DEAD box signature appears at 151–154; it reads DEAD. Positions 214 to 374 constitute a Helicase C-terminal domain; the sequence is NIQQFYLEVQ…RMDAPTLDEA (161 aa). The tract at residues 428–528 is disordered; it reads TTPIALTSEP…RKHHSRKPQA (101 aa). Residues 458–506 are compositionally biased toward basic and acidic residues; the sequence is DGNRNRSRDGRGGDGRNRDRNRDGRNRDGNRDRNREGSRDGNRGRRGEG. The segment covering 518-528 has biased composition (basic residues); the sequence is ERKHHSRKPQA.

This sequence belongs to the DEAD box helicase family. CshA subfamily. In terms of assembly, oligomerizes, may be a member of the RNA degradosome.

Its subcellular location is the cytoplasm. It carries out the reaction ATP + H2O = ADP + phosphate + H(+). In terms of biological role, DEAD-box RNA helicase possibly involved in RNA degradation. Unwinds dsRNA in both 5'- and 3'-directions, has RNA-dependent ATPase activity. The protein is DEAD-box ATP-dependent RNA helicase CshA of Bacillus thuringiensis (strain Al Hakam).